Consider the following 441-residue polypeptide: Putative T-box protein 32 (441 aa).

Residues 18–199 constitute a DNA-binding region (T-box); it reads NVIGSSRTSD…TGPSAKKTPE (182 aa). Residues 268-289 are disordered; it reads SLSSPAALQQDSTVSSDNDFDD. The segment covering 273–284 has biased composition (polar residues); it reads AALQQDSTVSSD.

The protein localises to the nucleus. The chain is Putative T-box protein 32 (tbx-32) from Caenorhabditis elegans.